We begin with the raw amino-acid sequence, 37 residues long: Photosystem II reaction center protein T (37 aa).

The helical transmembrane segment at 3–23 (ALVYTFLLVSTLGILFFAIFF) threads the bilayer.

Belongs to the PsbT family. PSII is composed of 1 copy each of membrane proteins PsbA, PsbB, PsbC, PsbD, PsbE, PsbF, PsbH, PsbI, PsbJ, PsbK, PsbL, PsbM, PsbT, PsbY, PsbZ, Psb30/Ycf12, at least 3 peripheral proteins of the oxygen-evolving complex and a large number of cofactors. It forms dimeric complexes.

The protein localises to the plastid. It is found in the chloroplast thylakoid membrane. In terms of biological role, found at the monomer-monomer interface of the photosystem II (PS II) dimer, plays a role in assembly and dimerization of PSII. PSII is a light-driven water plastoquinone oxidoreductase, using light energy to abstract electrons from H(2)O, generating a proton gradient subsequently used for ATP formation. The polypeptide is Photosystem II reaction center protein T (Ephedra sinica (Chinese ephedra)).